Reading from the N-terminus, the 3253-residue chain is tRNA nuclease CdiA (3253 aa).

The N-terminal stretch at Met-1 to Ala-32 is a signal peptide. The tract at residues Pro-36–Thr-322 is two-partner system transport domain (TPS). The tract at residues Gly-351–Asn-1384 is FHA-1. The interval Gln-1385–Asn-1656 is receptor binding domain (RBD). The tract at residues Tyr-1657–Asn-1841 is YP domain. The interval Gly-1842 to Asn-1902 is periplasmic FHA-1 repeat (pFR). Residues Thr-1944 to Ser-2548 form an FHA-2 region. Disordered regions lie at residues Gly-2228–Ser-2252, Thr-2362–Arg-2410, Gly-2483–Val-2503, and Ile-2687–Ser-2712. 3 stretches are compositionally biased toward polar residues: residues Gly-2240–Ser-2252, Thr-2368–Val-2403, and Thr-2490–Val-2503. The segment at Ser-2888–Ala-2930 is pretoxin (PT) domain. Positions Val-2931–Asn-2934 match the VDNN CT cleavage motif motif. Residues Val-2931–Lys-3253 form a C-terminal effector domain (CT) region.

In the N-terminal section; belongs to the CdiA toxin family. The protein in the C-terminal section; belongs to the bacterial EndoU family. Forms a 1:1 complex with cognate immunity protein CdiI-STECO31. TRNase activity is metal-independent. is required as a cofactor. In terms of processing, the CT domain is cleaved upon binding to receptor Tsx on target cells.

It is found in the secreted. The protein resides in the target cell. It localises to the target cell cytoplasm. Its function is as follows. Toxic component of a toxin-immunity protein module, which functions as a cellular contact-dependent growth inhibition (CDI) system. CDI modules allow bacteria to communicate with and inhibit the growth of closely related neighboring target bacteria in a contact-dependent fashion (target cell counts decrease 1000- to 10000-fold with this CDI). Uses outer membrane nucleoside transporter Tsx on target cells as a receptor. Gains access to the cytoplasm of target cells by using integral inner membrane protein PTS system glucose-specific EIICB component (ptsG). Targeting of the C-terminal domain (CT) domain (residues 2931-3253) in the absence of immunity protein inhibits cell growth and causes tRNA(UUC-Glu) cleavage; expression of cognate immunity protein CdiI-STECO31 neutralizes growth inhibition leaving tRNA(UUC-Glu) is intact, whereas non-cognate immunity proteins do not confer protection. The CT domain cleaves tRNA; it is most active against tRNA(UUC-Glu), but also has modest activity against tRNA(GUC-Asp), tRNA(UUG-Gln), tRNA(CCC-Gly), tRNA(UCC-Gly), tRNA(GCC-Gly), tRNA(UUU-Lys), tRNA(GGU-Thr) and tRNA(CCA-Trp); tRNA cleavage is inhibited by cognate immunity protein CdiI. Cleavage of tRNA(UUC-Glu) occurs in the anticodon loop between cytosine(37) and 2-methyladenosine(38) (C37-m2A38) and probably also occurs in the anticodon loop of other tRNAs as well. In terms of biological role, the CdiA protein is thought to be exported from the cell through the central lumen of CdiB, the other half of its two-partner system (TPS). The TPS domain probably remains associated with CdiB while the FHA-1 domain forms an extended filament (33 nm long) with the receptor-binding domain (RBD) at its extremity; in the secretion arrested state the C-terminus of the RBD and YP domains form a hairpin-like structure as the FHA-2, PT and CT domains are periplasmic. The YP domain is probably responsible for this arrest at the point where it re-enters the host cell periplasm. Upon binding to a target cell outer membrane receptor (Tsx for this CDI) a signal is transmitted to activate secretion. The filament becomes about 5 nm longer, the rest of CdiA is secreted and the FHA-2 domain becomes stably associated with the target cell's outer membrane where it facilitates entry of the toxic CT domain into the target cell periplasm. From there the toxic CT domain is cleaved and gains access to the target cell cytoplasm via an inner membrane protein (PTS system glucose-specific EIICB component, ptsG for this CDI). The polypeptide is tRNA nuclease CdiA (Escherichia coli (strain STEC_O31)).